The chain runs to 61 residues: Large ribosomal subunit protein bL28 (61 aa).

The segment at 1-27 is disordered; it reads MAKDFVTGKKTTFGNTRSHALNSSSRS. Residues 9-27 are compositionally biased toward polar residues; it reads KKTTFGNTRSHALNSSSRS.

Belongs to the bacterial ribosomal protein bL28 family.

The chain is Large ribosomal subunit protein bL28 from Lactobacillus delbrueckii subsp. bulgaricus (strain ATCC 11842 / DSM 20081 / BCRC 10696 / JCM 1002 / NBRC 13953 / NCIMB 11778 / NCTC 12712 / WDCM 00102 / Lb 14).